The following is a 464-amino-acid chain: Glycine receptor subunit alpha-3 (464 aa).

The first 33 residues, 1-33 (MAHVRHFRTLVSGFYFWEAALLLSLVATKETNS), serve as a signal peptide directing secretion. The Extracellular segment spans residues 34 to 255 (ARSRSAPMSP…RFHLERQMGY (222 aa)). Asn-71 carries an N-linked (GlcNAc...) asparagine glycan. Cys-171 and Cys-185 form a disulfide bridge. Zn(2+) contacts are provided by Glu-225 and Asp-227. Cys-231 and Cys-242 are disulfide-bonded. 235-240 (YNTGKF) lines the strychnine pocket. His-248 provides a ligand contact to Zn(2+). A helical membrane pass occupies residues 256-277 (YLIQMYIPSLLIVILSWVSFWI). Residues 278–282 (NMDAA) lie on the Cytoplasmic side of the membrane. A helical membrane pass occupies residues 283 to 303 (PARVALGITTVLTMTTQSSGS). Over 304–314 (RASLPKVSYVK) the chain is Extracellular. The helical transmembrane segment at 315-335 (AIDIWMAVCLLFVFSALLEYA) threads the bilayer. Residues 336–430 (AVNFVSRQHK…FIDRAKKIDT (95 aa)) lie on the Cytoplasmic side of the membrane. Ser-370 carries the post-translational modification Phosphoserine. At Ser-379 the chain carries Phosphoserine; by PKA. A helical membrane pass occupies residues 431 to 451 (ISRACFPLAFLIFNIFYWVIY). At 452 to 464 (KILRHEDIHQQQD) the chain is on the extracellular side.

It belongs to the ligand-gated ion channel (TC 1.A.9) family. Glycine receptor (TC 1.A.9.3) subfamily. GLRA3 sub-subfamily. In terms of assembly, homopentamer (in vitro). Heteropentamer composed of GLRA3 and GLRB. Both homopentamers and heteropentamers form functional ion channels, but their characteristics are subtly different. Phosphorylated by PKA; this causes down-regulation of channel activity. Dephosphorylated in response to activation of HTR1A signaling; this increases channel activity. As to expression, detected in brainstem, also in neurons that control rhythmic breathing. Detected in superficial laminae of the dorsal horn of the thoracic spinal cord. Detected in dentate gyrus in hippocampus, especially in stratum granulare. Detected in the inner plexiform layer in the retina (at protein level). Detected in midbrain, thalamus, brain cortex, hippocampus, and at lower levels in cerebellum.

It localises to the postsynaptic cell membrane. Its subcellular location is the synapse. The protein resides in the perikaryon. It is found in the cell projection. The protein localises to the dendrite. It localises to the cell membrane. The enzyme catalyses chloride(in) = chloride(out). Its activity is regulated as follows. Inhibited by prostaglandin E2, probably via PKA-mediated phosphorylation at Ser-379. In terms of biological role, glycine receptors are ligand-gated chloride channels. Channel opening is triggered by extracellular glycine. Channel characteristics depend on the subunit composition; heteropentameric channels display faster channel closure. Plays an important role in the down-regulation of neuronal excitability. Contributes to the generation of inhibitory postsynaptic currents. Contributes to increased pain perception in response to increased prostaglandin E2 levels. Plays a role in the regulation of breathing rhythm, especially of the duration of the postinspiratory phase. Plays a role in cellular responses to ethanol. This Mus musculus (Mouse) protein is Glycine receptor subunit alpha-3 (Glra3).